A 1242-amino-acid polypeptide reads, in one-letter code: ATP-dependent helicase/nuclease subunit A (1242 aa).

Residues 12–487 (SRWTDEQWKA…IDLASNFRSR (476 aa)) form the UvrD-like helicase ATP-binding domain. Residue 33 to 40 (AAAGSGKT) participates in ATP binding. The region spanning 514 to 808 (AAQLKYGADY…RVMTIHSSKG (295 aa)) is the UvrD-like helicase C-terminal domain.

This sequence belongs to the helicase family. AddA subfamily. Heterodimer of AddA and AddB/RexB. Mg(2+) serves as cofactor.

It carries out the reaction Couples ATP hydrolysis with the unwinding of duplex DNA by translocating in the 3'-5' direction.. It catalyses the reaction ATP + H2O = ADP + phosphate + H(+). Its function is as follows. The heterodimer acts as both an ATP-dependent DNA helicase and an ATP-dependent, dual-direction single-stranded exonuclease. Recognizes the chi site generating a DNA molecule suitable for the initiation of homologous recombination. The AddA nuclease domain is required for chi fragment generation; this subunit has the helicase and 3' -&gt; 5' nuclease activities. In Geobacillus thermodenitrificans (strain NG80-2), this protein is ATP-dependent helicase/nuclease subunit A.